The primary structure comprises 895 residues: Dystroglycan 1 (895 aa).

Positions 1 to 29 (MRMSVGSAVPLPLWGRTFLLLLSVAVTQS) are cleaved as a signal peptide. Residues 30 to 408 (HWPSEPSEAV…SQIRPTMTIP (379 aa)) are required for laminin recognition. The tract at residues 49 to 71 (SMHSALSDLHETVPTVVGIPDGT) is O-glycosylated at one site. Asn-141 is a glycosylation site (N-linked (GlcNAc...) asparagine). Cys-182 and Cys-264 are joined by a disulfide. The interval 316-485 (ATPTPVTAIG…PATRMRTTTS (170 aa)) is mucin-like domain. 3 O-linked (Man6P...) threonine glycosylation sites follow: Thr-317, Thr-319, and Thr-379. The tract at residues 381 to 500 (TLGPIQPTRV…GEPNQRPELK (120 aa)) is disordered. The span at 393–403 (AGTTVPSQIRP) shows a compositional bias: polar residues. Residues 413-447 (PSTVTTPPTTTTKKPRVSTPRPATPSTDSSTTTTR) show a composition bias toward low complexity. Residues 463-485 (TTKAPITRLETASPATRMRTTTS) form an O-glycosylated at seven sites with GalNAc region. Residues 603-712 (KAPARFKAKL…MSITVTGSGS (110 aa)) form the Peptidase S72 domain. 3 N-linked (GlcNAc...) asparagine glycosylation sites follow: Asn-641, Asn-649, and Asn-661. The Extracellular portion of the chain corresponds to 654–749 (SIVVEWTNNT…DPEKSSEDDV (96 aa)). Residues Cys-669 and Cys-713 are joined by a disulfide bond. The segment at 724–747 (PMRVPSEAPATEVPDRDPEKSSED) is disordered. Positions 736 to 747 (VPDRDPEKSSED) are enriched in basic and acidic residues. Residues 750–775 (YLHTVIPAVVVAAILLIAGIIAMICY) traverse the membrane as a helical segment. Positions 776–782 (RKKRKGK) match the Nuclear localization signal motif. The Cytoplasmic portion of the chain corresponds to 776 to 895 (RKKRKGKLTL…YRSPPPYVPP (120 aa)). A Phosphothreonine modification is found at Thr-790. The segment at 819–895 (LQEEKAPLPP…YRSPPPYVPP (77 aa)) is required for interaction with CAV3. The disordered stretch occupies residues 823 to 895 (KAPLPPPEYP…YRSPPPYVPP (73 aa)). Residues 832-846 (PNQSMPETTPLNQDT) show a composition bias toward polar residues. Over residues 859–870 (SAPPYQPPPPFT) the composition is skewed to pro residues. A required for binding DMD and UTRN region spans residues 880–895 (PKNMTPYRSPPPYVPP). Positions 889 to 892 (PPPY) match the PPXY motif motif. Tyr-892 carries the phosphotyrosine; by SRC modification.

In terms of assembly, monomer. Heterodimer of alpha- and beta-dystroglycan subunits which are the central components of the dystrophin-glycoprotein complex. This complex then can form a dystrophin-associated glycoprotein complex (DGC) which is composed of three subcomplexes: a cytoplasmic complex comprised of DMD (or UTRN), DTNA and a number of syntrophins, such as SNTB1, SNTB2, SNTG1 and SNTG2, the transmembrane dystroglycan complex, and the sarcoglycan-sarcospan complex. Interacts (via the N-terminal of alphaDAG1) with LARGE1; the interaction enhances laminin binding. Interacts with SGCD. Interacts with AGR2 and AGR3. Interacts (betaDAG1) with DMD; the interaction is inhibited by phosphorylation on the PPXY motif. Interacts (betaDAG1, via its PPXY motif) with UTRN (via its WWW and ZZ domains); the interaction is inhibited by phosphorylation on the PPXY motif. Interacts (betaDAG1, via its phosphorylated PPXY motif) with the SH2 domain-containing proteins, FYN, CSK, NCK and SHC. Interacts (betaDAG1) with CAV3 (via a central WW-like domain); the interaction disrupts the binding of DMD. BetaDAG1 directly interacts with ANK3, but not with ANK2; this interaction does not interfere with DMD-binding and is required for retention at costameres. Identified in a dystroglycan complex that contains at least PRX, DRP2, UTRN, DMD and DAG1. Interacts with POMGNT1. BetaDAG1 interacts with CD93. Post-translationally, O-glycosylated. POMGNT1 catalyzes the initial addition of N-acetylglucosamine, giving rise to the GlcNAc(beta1-2)Man(alpha1-)O-Ser/Thr moiety and thus providing the necessary basis for the addition of further carbohydrate moieties. Heavily O-glycosylated comprising of up to two thirds of its mass and the carbohydrate composition differs depending on tissue type. Mucin-type O-glycosylation is important for ligand binding activity. O-mannosylation is found in high abundance in both brain and muscle where the most abundant glycan is Sia-alpha-2-3-Gal-beta-1-4-Glc-NAc-beta-1-2-Man. In muscle, glycosylation on Thr-317, Thr-319 and Thr-379 by a phosphorylated O-mannosyl glycan with the structure 2-(N-acetylamido)-2-deoxygalactosyl-beta-1,3-2-(N-acetylamido)-2-deoxyglucosyl-beta-1,4-6-phosphomannose is mediated by like-acetylglucosaminyltransferase (LARGE1) protein amd is required for laminin binding. O-glycosylated in the N-terminal region with a core 1 or possibly core 8 glycan. The brain form displays a unique glycosylation pattern which is absent in other tissues; this form shows enhanced binding to laminin LAMA5 compared to the skeletal muscle form. In terms of processing, N-glycosylated. Autolytic cleavage produces the alpha and beta subunits. In cutaneous cells, as well as in certain pathological conditions, shedding of beta-dystroglycan can occur releasing a peptide of about 30 kDa. Post-translationally, SRC-mediated phosphorylation of the PPXY motif of the beta subunit recruits SH2 domain-containing proteins, but inhibits binding to WWW domain-containing proteins, DMD and UTRN. This phosphorylation also inhibits nuclear entry. As to expression, expressed in brain (at protein level). Expressed in the myelin sheath of peripheral nerves.

The protein localises to the secreted. It is found in the extracellular space. It localises to the cell membrane. The protein resides in the cytoplasm. Its subcellular location is the cytoskeleton. The protein localises to the nucleus. It is found in the nucleoplasm. It localises to the sarcolemma. The protein resides in the postsynaptic cell membrane. Functionally, the dystroglycan complex is involved in a number of processes including laminin and basement membrane assembly, sarcolemmal stability, cell survival, peripheral nerve myelination, nodal structure, cell migration, and epithelial polarization. Extracellular peripheral glycoprotein that acts as a receptor for extracellular matrix proteins containing laminin-G domains. Receptor for laminin-2 (LAMA2) and agrin in peripheral nerve Schwann cells. Also acts as a receptor for laminin LAMA5. Its function is as follows. Transmembrane protein that plays important roles in connecting the extracellular matrix to the cytoskeleton. Acts as a cell adhesion receptor in both muscle and non-muscle tissues. Receptor for both DMD and UTRN and, through these interactions, scaffolds axin to the cytoskeleton. Also functions in cell adhesion-mediated signaling and implicated in cell polarity. In Bos taurus (Bovine), this protein is Dystroglycan 1.